A 493-amino-acid polypeptide reads, in one-letter code: Extracellular tyrosine-protein kinase PKDCC (493 aa).

The N-terminal stretch at 1–32 (MRRRRAAVAAGFCASFLLGSVLNVLFAPGSEP) is a signal peptide. The segment at 28-128 (PGSEPPRPGQ…PGPGSPGPGP (101 aa)) is disordered. The segment covering 30-46 (SEPPRPGQSPEPSPAPG) has biased composition (pro residues). Basic and acidic residues predominate over residues 52 to 69 (GRGELARQIRARYEEVQR). Composition is skewed to pro residues over residues 95-105 (PGLPRPRPPWA) and 114-127 (GWPPAPGPGSPGPG). N-linked (GlcNAc...) asparagine glycosylation occurs at Asn137. The Protein kinase domain maps to 138 to 493 (VSGAQYMGSG…NKTTYVKASG (356 aa)). ATP is bound by residues 144–152 (MGSGYTKAV) and Lys166. A Phosphotyrosine modification is found at Tyr148. Position 177 is a phosphoserine (Ser177). Asp278 (proton acceptor) is an active-site residue. Asn320, Asn369, Asn400, Asn460, and Asn484 each carry an N-linked (GlcNAc...) asparagine glycan.

Belongs to the protein kinase superfamily. N-glycosylated. In terms of processing, phosphorylated on tyrosines; probably via autophosphorylation. In terms of tissue distribution, highly expressed in platelets.

It is found in the secreted. It localises to the golgi apparatus. The catalysed reaction is L-tyrosyl-[protein] + ATP = O-phospho-L-tyrosyl-[protein] + ADP + H(+). Functionally, secreted tyrosine-protein kinase that mediates phosphorylation of extracellular proteins and endogenous proteins in the secretory pathway, which is essential for patterning at organogenesis stages. Mediates phosphorylation of MMP1, MMP13, MMP14, MMP19 and ERP29. Probably plays a role in platelets: rapidly and quantitatively secreted from platelets in response to stimulation of platelet degranulation. May also have serine/threonine protein kinase activity. Required for longitudinal bone growth through regulation of chondrocyte differentiation. May be indirectly involved in protein transport from the Golgi apparatus to the plasma membrane. This chain is Extracellular tyrosine-protein kinase PKDCC, found in Homo sapiens (Human).